Here is a 1478-residue protein sequence, read N- to C-terminus: DNA-directed RNA polymerase subunit beta' (1478 aa).

Mg(2+) is bound by residues Asp-535, Asp-537, and Asp-539. The Zn(2+) site is built by Cys-1034, Cys-1109, Cys-1116, and Cys-1119.

It belongs to the RNA polymerase beta' chain family. In terms of assembly, the RNAP catalytic core consists of 2 alpha, 1 beta, 1 beta' and 1 omega subunit. When a sigma factor is associated with the core the holoenzyme is formed, which can initiate transcription. Requires Mg(2+) as cofactor. The cofactor is Zn(2+).

The enzyme catalyses RNA(n) + a ribonucleoside 5'-triphosphate = RNA(n+1) + diphosphate. DNA-dependent RNA polymerase catalyzes the transcription of DNA into RNA using the four ribonucleoside triphosphates as substrates. The protein is DNA-directed RNA polymerase subunit beta' of Mycoplasmopsis agalactiae (strain NCTC 10123 / CIP 59.7 / PG2) (Mycoplasma agalactiae).